The primary structure comprises 240 residues: LexA repressor (240 aa).

The H-T-H motif DNA-binding region spans 26-46 (FDEMKDALDLKSKSGIHRLIT). Residues S161 and K199 each act as for autocatalytic cleavage activity in the active site.

Belongs to the peptidase S24 family. Homodimer.

It carries out the reaction Hydrolysis of Ala-|-Gly bond in repressor LexA.. In terms of biological role, represses a number of genes involved in the response to DNA damage (SOS response), including recA and lexA. In the presence of single-stranded DNA, RecA interacts with LexA causing an autocatalytic cleavage which disrupts the DNA-binding part of LexA, leading to derepression of the SOS regulon and eventually DNA repair. The chain is LexA repressor from Methylobacterium nodulans (strain LMG 21967 / CNCM I-2342 / ORS 2060).